The following is a 136-amino-acid chain: Cytidine deaminase (136 aa).

Residues 1–128 enclose the CMP/dCMP-type deaminase domain; that stretch reads MDVEKLIAES…KLLPGAFSKE (128 aa). 42-44 is a binding site for substrate; that stretch reads NIE. Cys-53 provides a ligand contact to Zn(2+). Residue Glu-55 is the Proton donor of the active site. Cys-86 and Cys-89 together coordinate Zn(2+).

Belongs to the cytidine and deoxycytidylate deaminase family. Zn(2+) is required as a cofactor.

It catalyses the reaction cytidine + H2O + H(+) = uridine + NH4(+). It carries out the reaction 2'-deoxycytidine + H2O + H(+) = 2'-deoxyuridine + NH4(+). In terms of biological role, this enzyme scavenges exogenous and endogenous cytidine and 2'-deoxycytidine for UMP synthesis. This is Cytidine deaminase (cdd) from Sporosarcina psychrophila (Bacillus psychrophilus).